The following is a 212-amino-acid chain: Ropporin-1 (212 aa).

The 32-residue stretch at 12–43 folds into the RIIa domain; sequence PELPELLKQFTKAAIRSQPQDLIQWAAEYFGA. A Phosphoserine modification is found at serine 56. The segment at 209–212 is interaction with RHPN1; it reads VRLE.

The protein belongs to the ropporin family. As to quaternary structure, homodimer. Interacts with AKAP3. May interact with SPA17. Interacts with RHPN1. Interacts with FSCB; the interaction increases upon spermatozoa capacitation conditions. Interacts with CFAP61. In terms of processing, sumoylated, sumoylation decreases upon spermatozoa capacitation conditions.

It localises to the cell projection. Its subcellular location is the cilium. It is found in the flagellum. Important for male fertility. With ROPN1L, involved in fibrous sheath integrity and sperm motility, plays a role in PKA-dependent signaling processes required for spermatozoa capacitation. In Bos taurus (Bovine), this protein is Ropporin-1 (ROPN1).